A 122-amino-acid chain; its full sequence is uncharacterized protein (122 aa).

A run of 3 helical transmembrane segments spans residues 21 to 40 (VWSW…SIAI), 57 to 77 (YTHM…CICI), and 94 to 114 (LLFS…YCIY).

The protein resides in the membrane. This is an uncharacterized protein from Saccharomyces cerevisiae (strain ATCC 204508 / S288c) (Baker's yeast).